Consider the following 108-residue polypeptide: MLKTTLLFFVTALCEIIGCFLPWLWIKRGASVWWLLPAAASLALFVWLLTLHPAASGRVYAAYGGVYVCTALLWLRVVDGVRLTVYDWSGALIALCGMLIIVVGWGRT.

Residues 1 to 5 are Periplasmic-facing; the sequence is MLKTT. The chain crosses the membrane as a helical span at residues 6 to 26; the sequence is LLFFVTALCEIIGCFLPWLWI. Residues 27–30 are Cytoplasmic-facing; sequence KRGA. Residues 31–51 traverse the membrane as a helical segment; that stretch reads SVWWLLPAAASLALFVWLLTL. Topologically, residues 52–60 are periplasmic; that stretch reads HPAASGRVY. Residues 61–81 form a helical membrane-spanning segment; the sequence is AAYGGVYVCTALLWLRVVDGV. Residues 82-84 lie on the Cytoplasmic side of the membrane; sequence RLT. A helical membrane pass occupies residues 85–105; the sequence is VYDWSGALIALCGMLIIVVGW. The Periplasmic segment spans residues 106 to 108; sequence GRT.

This sequence belongs to the UPF0060 family.

It localises to the cell inner membrane. This is UPF0060 membrane protein YnfA from Salmonella typhi.